Consider the following 859-residue polypeptide: DNA mismatch repair protein MutS (859 aa).

618 to 625 serves as a coordination point for ATP; it reads GPNMGGKS.

It belongs to the DNA mismatch repair MutS family.

Functionally, this protein is involved in the repair of mismatches in DNA. It is possible that it carries out the mismatch recognition step. This protein has a weak ATPase activity. In Shewanella halifaxensis (strain HAW-EB4), this protein is DNA mismatch repair protein MutS.